The following is a 325-amino-acid chain: Glutarate 2-hydroxylase (325 aa).

Fe cation contacts are provided by His-160, Asp-162, and His-292.

This sequence belongs to the glutarate hydroxylase family. As to quaternary structure, homotetramer. Requires Fe(2+) as cofactor.

It carries out the reaction glutarate + 2-oxoglutarate + O2 = (S)-2-hydroxyglutarate + succinate + CO2. Its pathway is amino-acid degradation. In terms of biological role, acts as an alpha-ketoglutarate-dependent dioxygenase catalyzing hydroxylation of glutarate (GA) to L-2-hydroxyglutarate (L2HG). Functions in a L-lysine degradation pathway that proceeds via cadaverine, glutarate and L-2-hydroxyglutarate. In Escherichia coli O127:H6 (strain E2348/69 / EPEC), this protein is Glutarate 2-hydroxylase.